A 309-amino-acid chain; its full sequence is Olfactory receptor 7A17 (309 aa).

The Extracellular segment spans residues 1-25 (MEPENDTGISEFVLLGLSEEPELQP). Asn5 carries an N-linked (GlcNAc...) asparagine glycan. The chain crosses the membrane as a helical span at residues 26 to 46 (FLFGLFLSMYLVTVLGNLLII). At 47-54 (LATISDSH) the chain is on the cytoplasmic side. Residues 55–75 (LHTPMYFFLSNLSFADICFIS) form a helical membrane-spanning segment. Residues 76-99 (TTIPKMLINIQTQSRVITYAGCIT) lie on the Extracellular side of the membrane. A disulfide bridge links Cys97 with Cys189. A helical transmembrane segment spans residues 100–120 (QMCFFVLFGGLDSLLLAVMAY). Residues 121–139 (DRFVAICHPLHYTVIMNPR) are Cytoplasmic-facing. Residues 140–160 (LCGLLVLASWMIAALNSLSQS) form a helical membrane-spanning segment. Residues 161–197 (LMVLWLSFCTDLEIPHFFCELNQVIHLACSDTFLNDM) are Extracellular-facing. Residues 198–217 (GMYFAAGLLAGGPLVGILCS) traverse the membrane as a helical segment. The Cytoplasmic segment spans residues 218–237 (YSKIVSSIRAISSAQGKYKA). Residues 238 to 258 (FSTCASHLSVVSLFCCTGLGV) traverse the membrane as a helical segment. At 259 to 271 (YLTSAATHNSHTS) the chain is on the extracellular side. Residues 272–292 (ATASVMYTVATPMLNPFIYSL) form a helical membrane-spanning segment. Residues 293–309 (RNKDIKRALKMSFRGKQ) are Cytoplasmic-facing.

This sequence belongs to the G-protein coupled receptor 1 family.

The protein resides in the cell membrane. Odorant receptor. The protein is Olfactory receptor 7A17 (OR7A17) of Homo sapiens (Human).